Here is a 666-residue protein sequence, read N- to C-terminus: MKSETGYMGFVVVLVFMVLLALQLATLSAPATQIAYSDFRKLAAAAQLDDLEVSPTRITGVLRSASAAAALPASDAEAIKRAGTPWRFSTKRVTDERLIDTLAATGTRYRGADDDTWIGTLASWIVPIAVFALVWNLMLRRPRGGLQDWSGVGKSKPRVYVEAKTGIDFDDIAGIDEAKAELQQIVAFLRAPARYQRLGGKIPKGVLIVGAPGTGKTLLAKAVAGEAGVPFFSTSGSSFVEMFVGVGAARVRDLFEQAQQKAPCIIFIDELDALGKVRGAGLASGNDEREQTLNQLLVEMDGFQANSGVILMAATNRPEILDPALLRPGRFDRHIAIDRPDLTGRRQILSVHVKHVKLGPDVDLGELASRTPGFVGADLANIVNEAALHAAELDKPAIDMSDFDEAIDRAMTGMERKSRVMSEREKITIAHHEAGHALIAQTRAHSDPVKKVSIIPRGIAALGYTQQVPTEDRYVLRKSELLDRLDVLLGGRVAEEIVFGDVSTGAENDLERATEMARHMVARYGMSERIGLATFGDADTQGLSPLVWQRGGERCSESTATRIDDEIQRLLAEAHDRVSRTLKERRGALERIAGYLLEHEVVDHDKLVRLVNDEPTPEPGARDPGGDAAKRSGIGAAPAKPPAEVGSAELRDPARKADNADHSVPQ.

The Cytoplasmic segment spans residues 1 to 6 (MKSETG). A helical transmembrane segment spans residues 7–27 (YMGFVVVLVFMVLLALQLATL). Residues 28–116 (SAPATQIAYS…TRYRGADDDT (89 aa)) lie on the Periplasmic side of the membrane. A helical transmembrane segment spans residues 117 to 137 (WIGTLASWIVPIAVFALVWNL). Residues 138-666 (MLRRPRGGLQ…ADNADHSVPQ (529 aa)) are Cytoplasmic-facing. 210–217 (GAPGTGKT) contributes to the ATP binding site. His432 provides a ligand contact to Zn(2+). Glu433 is an active-site residue. Residues His436 and Asp509 each contribute to the Zn(2+) site. The tract at residues 612–666 (NDEPTPEPGARDPGGDAAKRSGIGAAPAKPPAEVGSAELRDPARKADNADHSVPQ) is disordered. 2 stretches are compositionally biased toward basic and acidic residues: residues 620–630 (GARDPGGDAAK) and 649–666 (ELRDPARKADNADHSVPQ).

In the central section; belongs to the AAA ATPase family. The protein in the C-terminal section; belongs to the peptidase M41 family. As to quaternary structure, homohexamer. Zn(2+) is required as a cofactor.

It is found in the cell inner membrane. Its function is as follows. Acts as a processive, ATP-dependent zinc metallopeptidase for both cytoplasmic and membrane proteins. Plays a role in the quality control of integral membrane proteins. The protein is ATP-dependent zinc metalloprotease FtsH of Burkholderia pseudomallei (strain 1710b).